A 476-amino-acid polypeptide reads, in one-letter code: Serine/threonine-protein kinase WAG1 (476 aa).

A Protein kinase domain is found at 93–400; that stretch reads FKLVRHLGTG…AQDIKRHEFF (308 aa). ATP-binding positions include 99–107 and Lys124; that span reads LGTGNLGRV. The active-site Proton acceptor is Asp219.

It belongs to the protein kinase superfamily. Ser/Thr protein kinase family. As to expression, expressed in root tips and lateral root primordia.

The protein localises to the cytoplasm. It is found in the cytosol. It catalyses the reaction L-seryl-[protein] + ATP = O-phospho-L-seryl-[protein] + ADP + H(+). The catalysed reaction is L-threonyl-[protein] + ATP = O-phospho-L-threonyl-[protein] + ADP + H(+). Functionally, serine/threonine-protein kinase involved in the regulation of auxin signaling. Acts as a positive regulator of cellular auxin efflux and regulates organ development by enhancing PIN-mediated polar auxin transport. Phosphorylates conserved serine residues in the PIN auxin efflux carriers. Phosphorylation of PIN proteins is required and sufficient for apical-basal PIN polarity that enables directional intercellular auxin fluxes, which mediate differential growth, tissue patterning and organogenesis. Acts as a suppressor of root waving. The protein is Serine/threonine-protein kinase WAG1 (WAG1) of Arabidopsis thaliana (Mouse-ear cress).